Consider the following 238-residue polypeptide: Major prion protein (238 aa).

Positions 1-15 are cleaved as a signal peptide; sequence MLVLFVATWSDLGLC. Residues 16–215 are interaction with GRB2, ERI3 and SYN1; it reads KKRPKPGGWN…ESQAYYQRGS (200 aa). Residues 18–93 are disordered; the sequence is RPKPGGWNTG…WHKPSKPKTS (76 aa). 4 consecutive repeat copies span residues 44 to 52, 53 to 60, 61 to 68, and 69 to 76. Residues 44–76 form a 4 X 8 AA tandem repeats of P-H-G-G-G-W-G-Q region; sequence PQGGGGWGQPHGGGWGQPHGGGWGQPHGGGWGQ. Residues 45–80 are compositionally biased toward gly residues; sequence QGGGGWGQPHGGGWGQPHGGGWGQPHGGGWGQGGGT. Residues Gly-47, Gly-48, His-54, Gly-55, Gly-56, His-62, Gly-63, Gly-64, His-70, Gly-71, and Gly-72 each coordinate Cu(2+). Residues 83–93 are compositionally biased toward basic residues; that stretch reads QWHKPSKPKTS. Cys-164 and Cys-199 are oxidised to a cystine. Asn-166 and Asn-182 each carry an N-linked (GlcNAc...) asparagine glycan. The GPI-anchor amidated serine moiety is linked to residue Ser-215. A propeptide spans 216 to 238 (removed in mature form); that stretch reads SMVLFSSPPVILLISFLIFLIVG.

Belongs to the prion family. As to quaternary structure, monomer and homodimer. Has a tendency to aggregate into amyloid fibrils containing a cross-beta spine, formed by a steric zipper of superposed beta-strands. Soluble oligomers may represent an intermediate stage on the path to fibril formation. Copper binding may promote oligomerization. Interacts with GRB2, APP, ERI3/PRNPIP and SYN1. Mislocalized cytosolically exposed PrP interacts with MGRN1; this interaction alters MGRN1 subcellular location and causes lysosomal enlargement. Interacts with KIAA1191.

Its subcellular location is the cell membrane. The protein resides in the golgi apparatus. In terms of biological role, its primary physiological function is unclear. Has cytoprotective activity against internal or environmental stresses. May play a role in neuronal development and synaptic plasticity. May be required for neuronal myelin sheath maintenance. May play a role in iron uptake and iron homeostasis. Soluble oligomers are toxic to cultured neuroblastoma cells and induce apoptosis (in vitro). Association with GPC1 (via its heparan sulfate chains) targets PRNP to lipid rafts. Also provides Cu(2+) or Zn(2+) for the ascorbate-mediated GPC1 deaminase degradation of its heparan sulfate side chains. The chain is Major prion protein (PRNP) from Macaca sylvanus (Barbary macaque).